A 263-amino-acid polypeptide reads, in one-letter code: Phosphoinositide-3-kinase-interacting protein 1 (263 aa).

Positions M1–G21 are cleaved as a signal peptide. The Extracellular segment spans residues S22 to T168. The region spanning G24–C101 is the Kringle domain. 3 cysteine pairs are disulfide-bonded: C25–C101, C46–C82, and C70–C96. N-linked (GlcNAc...) asparagine glycosylation is present at N98. A helical membrane pass occupies residues L169–I189. Topologically, residues L190 to A263 are cytoplasmic. The span at Q242 to S251 shows a compositional bias: polar residues. Residues Q242–A263 are disordered.

Its subcellular location is the cell membrane. In terms of biological role, negative regulator of hepatic phosphatidylinositol 3-kinase (PI3K) activity. The polypeptide is Phosphoinositide-3-kinase-interacting protein 1 (PIK3IP1) (Pongo abelii (Sumatran orangutan)).